The primary structure comprises 471 residues: Heat shock 70 kDa protein 13 (471 aa).

The first 22 residues, 1–22 (MAGEMTILGSAVLTLLLAGYLA), serve as a signal peptide directing secretion. Positions 315 to 337 (ENDRKGPPTSDSELPKDKFSQAN) are disordered.

Belongs to the heat shock protein 70 family. In terms of assembly, binds UBQLN2.

Its subcellular location is the microsome. The protein localises to the endoplasmic reticulum. Its function is as follows. Has peptide-independent ATPase activity. This is Heat shock 70 kDa protein 13 (HSPA13) from Bos taurus (Bovine).